Consider the following 411-residue polypeptide: Phosphoglycerate kinase (411 aa).

A disordered region spans residues 1-24 (MTGLCPLHQPSPLDHPHSGGTPMQ). Substrate-binding positions include 41–43 (DYN), arginine 56, 79–82 (HFGR), arginine 139, and arginine 172. Residues lysine 222, glycine 310, glutamate 341, and 369–372 (GGDS) each bind ATP.

This sequence belongs to the phosphoglycerate kinase family. As to quaternary structure, monomer.

The protein resides in the cytoplasm. The enzyme catalyses (2R)-3-phosphoglycerate + ATP = (2R)-3-phospho-glyceroyl phosphate + ADP. It functions in the pathway carbohydrate degradation; glycolysis; pyruvate from D-glyceraldehyde 3-phosphate: step 2/5. The protein is Phosphoglycerate kinase of Deinococcus radiodurans (strain ATCC 13939 / DSM 20539 / JCM 16871 / CCUG 27074 / LMG 4051 / NBRC 15346 / NCIMB 9279 / VKM B-1422 / R1).